The chain runs to 259 residues: Indole-diterpene biosynthesis cluster protein S (259 aa).

5 helical membrane-spanning segments follow: residues 5 to 25, 64 to 84, 87 to 107, 134 to 154, and 221 to 241; these read EASG…GMVW, WFAL…AIIL, VYLI…LWVL, VLWF…AASF, and LGAG…PAAG.

This sequence belongs to the ltmS family.

The protein resides in the membrane. Its function is as follows. Part of the gene cluster that mediates the biosynthesis of paspalitrems, indole-diterpene (IDT) mycotoxins that are potent tremorgens in mammals. The geranylgeranyl diphosphate (GGPP) synthase idtG is proposed to catalyze the first step in IDT biosynthesis via catalysis of a series of iterative condensations of isopentenyl diphosphate (IPP) with dimethylallyl diphosphate (DMAPP), geranyl diphosphate (GPP), and farnesyl diphosphate (FPP), to form GGPP. Condensation of indole-3-glycerol phosphate with GGPP by the prenyltransferase idtC then forms 3-geranylgeranylindole (3-GGI). Epoxidation of the two terminal alkenes of the geranylgeranyl moiety by the FAD-dependent monooxygenase idtM, and cyclization by the terpene cyclase idtB then leads to the production of paspaline. The cytochrome P450 monooxygenase idtP then catalyzes oxidative elimination of the pendant methyl group at C-12 of paspaline and generates the C-10 ketone to yield 13-desoxypaxilline. The cytochrome P450 monooxygenase idtQ may catalyze the C-13 oxidation of 13-desoxypaxilline to afford paxilline. Considering that both paspalicine and paxilline were detected in C.paspali, idtQ also catalyzes the formation of paspalinine from 13-desoxypaxilline via paspalicine as an intermediate. Finally, the alpha-prenyltransferase idtF prenylates paspalinine at the C-20 or the C-21 positions to yield paspalitrems A and C, respectively. The hydroxylation of paspalitrem A at C-32 by a still unknown oxidase affords paspalitrem B. This chain is Indole-diterpene biosynthesis cluster protein S, found in Claviceps paspali (Rye ergot fungus).